We begin with the raw amino-acid sequence, 326 residues long: Putative ABC transporter ATP-binding protein MA_4020 (326 aa).

Residues M1–N12 are compositionally biased toward polar residues. The interval M1–A34 is disordered. Positions L46–R281 constitute an ABC transporter domain. ATP is bound at residue G80 to S87.

Belongs to the ABC transporter superfamily.

It localises to the cell membrane. In terms of biological role, probably part of an ABC transporter complex. Responsible for energy coupling to the transport system. The polypeptide is Putative ABC transporter ATP-binding protein MA_4020 (Methanosarcina acetivorans (strain ATCC 35395 / DSM 2834 / JCM 12185 / C2A)).